Reading from the N-terminus, the 320-residue chain is Malate dehydrogenase (320 aa).

Residues 10–15 (GSGMIG) and aspartate 34 contribute to the NAD(+) site. Positions 83 and 89 each coordinate substrate. NAD(+) is bound by residues asparagine 96 and 119 to 121 (ITN). The substrate site is built by asparagine 121 and arginine 152. The Proton acceptor role is filled by histidine 176.

The protein belongs to the LDH/MDH superfamily. MDH type 3 family.

The catalysed reaction is (S)-malate + NAD(+) = oxaloacetate + NADH + H(+). Catalyzes the reversible oxidation of malate to oxaloacetate. The polypeptide is Malate dehydrogenase (Bartonella henselae (strain ATCC 49882 / DSM 28221 / CCUG 30454 / Houston 1) (Rochalimaea henselae)).